Reading from the N-terminus, the 249-residue chain is MAKSSLGQDSDSTAAVAVLKRAVELDAESRYQQALVCYQEGIDMLLQVLKGTKESSKRCVLRTKISGYMDRAENIKKYLDQEKEDGKYHKQIKIEENATGFSYESLFREYLHETVTEVWIEDPYIRQTHQLYNFLRFCEMLIKKPCKVRTIHLLTSGYEGLGNTQQSSGLEEIKQSLGSHGVVLEINYSSSIHDREIRFNNGWMIKIGRGLDYFKKPQGRFSLGYYDLDLRPCHETTVDIFHNKHTKKI.

In terms of domain architecture, MIT spans 8 to 86; sequence QDSDSTAAVA…KYLDQEKEDG (79 aa). Residues 168-231 are important for association with membranes; sequence SGLEEIKQSL…SLGYYDLDLR (64 aa).

Homodimer. Interacts (via MIT domain) with CHMP1A, CHMP1B, CHMP2A and IST1.

It is found in the late endosome membrane. The protein localises to the midbody. Its subcellular location is the membrane. In terms of biological role, required for efficient abscission at the end of cytokinesis, together with components of the ESCRT-III complex. The polypeptide is MIT domain-containing protein 1 (Mitd1) (Mus musculus (Mouse)).